The primary structure comprises 102 residues: 10 kDa heat shock protein, mitochondrial (102 aa).

Ala-2 carries the post-translational modification N-acetylalanine. Lys-8 is subject to N6-acetyllysine. At Lys-28 the chain carries N6-succinyllysine. N6-acetyllysine; alternate is present on Lys-40. N6-malonyllysine; alternate occurs at positions 40, 54, and 56. N6-succinyllysine; alternate occurs at positions 40, 54, 56, 66, and 70. N6-acetyllysine; alternate is present on residues Lys-56, Lys-66, and Lys-70. Thr-79 carries the phosphothreonine modification. Lys-80 and Lys-86 each carry N6-acetyllysine; alternate. N6-succinyllysine; alternate occurs at positions 80 and 86. Lys-99 carries the post-translational modification N6-acetyllysine.

The protein belongs to the GroES chaperonin family. In terms of assembly, homoheptamer arranged in a ring structure. 2 heptameric Hsp10 rings interact with a Hsp60 tetradecamer in the structure of a back-to-back double heptameric ring to form the symmetrical football complex.

The protein resides in the mitochondrion matrix. Its function is as follows. Co-chaperonin implicated in mitochondrial protein import and macromolecular assembly. Together with Hsp60, facilitates the correct folding of imported proteins. May also prevent misfolding and promote the refolding and proper assembly of unfolded polypeptides generated under stress conditions in the mitochondrial matrix. The functional units of these chaperonins consist of heptameric rings of the large subunit Hsp60, which function as a back-to-back double ring. In a cyclic reaction, Hsp60 ring complexes bind one unfolded substrate protein per ring, followed by the binding of ATP and association with 2 heptameric rings of the co-chaperonin Hsp10. This leads to sequestration of the substrate protein in the inner cavity of Hsp60 where, for a certain period of time, it can fold undisturbed by other cell components. Synchronous hydrolysis of ATP in all Hsp60 subunits results in the dissociation of the chaperonin rings and the release of ADP and the folded substrate protein. The chain is 10 kDa heat shock protein, mitochondrial (HSPE1) from Bos taurus (Bovine).